A 67-amino-acid polypeptide reads, in one-letter code: Large ribosomal subunit protein uL29 (67 aa).

The protein belongs to the universal ribosomal protein uL29 family.

The sequence is that of Large ribosomal subunit protein uL29 from Desulfitobacterium hafniense (strain Y51).